The following is a 376-amino-acid chain: 1-deoxy-D-xylulose 5-phosphate reductoisomerase (376 aa).

NADPH-binding residues include threonine 12, glycine 13, serine 14, isoleucine 15, arginine 39, glutamine 40, and asparagine 110. Residue lysine 111 coordinates 1-deoxy-D-xylulose 5-phosphate. Glutamate 112 provides a ligand contact to NADPH. Aspartate 136 serves as a coordination point for Mn(2+). 1-deoxy-D-xylulose 5-phosphate is bound by residues serine 137, glutamate 138, serine 162, and histidine 185. Glutamate 138 is a binding site for Mn(2+). Glycine 191 is a binding site for NADPH. 1-deoxy-D-xylulose 5-phosphate-binding residues include serine 198, asparagine 203, lysine 204, and glutamate 207. Position 207 (glutamate 207) interacts with Mn(2+).

The protein belongs to the DXR family. The cofactor is Mg(2+). Mn(2+) serves as cofactor.

The enzyme catalyses 2-C-methyl-D-erythritol 4-phosphate + NADP(+) = 1-deoxy-D-xylulose 5-phosphate + NADPH + H(+). The protein operates within isoprenoid biosynthesis; isopentenyl diphosphate biosynthesis via DXP pathway; isopentenyl diphosphate from 1-deoxy-D-xylulose 5-phosphate: step 1/6. Catalyzes the NADPH-dependent rearrangement and reduction of 1-deoxy-D-xylulose-5-phosphate (DXP) to 2-C-methyl-D-erythritol 4-phosphate (MEP). This Treponema pallidum (strain Nichols) protein is 1-deoxy-D-xylulose 5-phosphate reductoisomerase.